The primary structure comprises 411 residues: KIN17-like protein (411 aa).

Residues 28–50 (CQMCQKQCRDENGFKCHCMSESH) form a C2H2-type zinc finger. Positions 51–160 (QRQMQVFGQN…KERLKNKRVK (110 aa)) are winged helix-turn-helix (wHTH). Residues 147–183 (ETLFKERLKNKRVKSDLAEEEKQEREIQRQIERAAEK) adopt a coiled-coil conformation. Disordered regions lie at residues 182 to 211 (EKLNGGGGEGETSGNDEVVDDGDDERKKDE) and 232 to 286 (VATG…EEEK). Residues 253–286 (KVERGEKRKRSGDSGRSEKERRSALDELMKEEEK) show a composition bias toward basic and acidic residues. The short motif at 259 to 262 (KRKR) is the Nuclear localization signal (NLS) element. Positions 265-294 (DSGRSEKERRSALDELMKEEEKKKERMNRK) form a coiled coil. The C-terminal subdomain A stretch occupies residues 301-352 (GIIVKVMSKALAEKGYYKQKGVVKKVIDNYVGEIKMLDSKHVLRVDQKELET). The C-terminal subdomain B stretch occupies residues 358–409 (GGMVKIVNGAYRGSNARLLGVDTEKFCAKVQIEKGVYDGRVIKSIEYEDICK).

Belongs to the KIN17 family. In terms of assembly, interacts with SPL7. As to expression, expressed in root vasculature, lateral roots, cotyledons, rosette leaves, cauline leaves, stems, sepals, style of pistils, mature pollen grains and siliques.

It is found in the nucleus speckle. Its function is as follows. Promotes the copper deficiency response by direct interaction with SPL7. Acts with SPL7 in a common pathway to promote copper-responsive genes and alleviate oxidative stress during copper-limiting periods. May promote SPL7 function when copper is limiting. Participates in the control of general plant growth and development, and in the response to counteract the negative effects of UV radiation. The polypeptide is KIN17-like protein (Arabidopsis thaliana (Mouse-ear cress)).